The primary structure comprises 375 residues: Glutamate 5-kinase (375 aa).

Lysine 17 provides a ligand contact to ATP. Positions 58, 145, and 157 each coordinate substrate. Residues 177–178 (SD) and 219–225 (TGGMVTK) each bind ATP. The PUA domain maps to 281–359 (QGALTLDDGA…RELARELGPA (79 aa)).

It belongs to the glutamate 5-kinase family.

It is found in the cytoplasm. It catalyses the reaction L-glutamate + ATP = L-glutamyl 5-phosphate + ADP. It functions in the pathway amino-acid biosynthesis; L-proline biosynthesis; L-glutamate 5-semialdehyde from L-glutamate: step 1/2. Its function is as follows. Catalyzes the transfer of a phosphate group to glutamate to form L-glutamate 5-phosphate. The sequence is that of Glutamate 5-kinase from Streptomyces avermitilis (strain ATCC 31267 / DSM 46492 / JCM 5070 / NBRC 14893 / NCIMB 12804 / NRRL 8165 / MA-4680).